A 132-amino-acid polypeptide reads, in one-letter code: uncharacterized protein (132 aa).

The protein belongs to the mycobacterial PPE family.

This is an uncharacterized protein from Mycobacterium tuberculosis (strain ATCC 25618 / H37Rv).